We begin with the raw amino-acid sequence, 389 residues long: Flap endonuclease 1 (389 aa).

The segment at 1–110 (MGIKGLMKLL…GELAKRSDRR (110 aa)) is N-domain. Aspartate 35 contributes to the Mg(2+) binding site. Residues arginine 48 and arginine 76 each coordinate DNA. Position 92 (aspartate 92) interacts with Mg(2+). Residues 103–124 (LAKRSDRRQEAQKALEEATEKG) form a disordered region. Residues 128 to 259 (DIDRFNKRLV…KKAYAGIKEH (132 aa)) are I-domain. Glutamate 164, glutamate 166, aspartate 185, and aspartate 187 together coordinate Mg(2+). Glutamate 164 is a binding site for DNA. DNA-binding residues include glycine 237 and aspartate 239. Residue aspartate 239 participates in Mg(2+) binding. The interaction with PCNA stretch occupies residues 350–358 (SQKRLDSFF). Positions 362 to 389 (PSANGAKKRKAPAAKGGKKAATAKKGKK) are disordered. The segment covering 367-389 (AKKRKAPAAKGGKKAATAKKGKK) has biased composition (basic residues).

Belongs to the XPG/RAD2 endonuclease family. FEN1 subfamily. In terms of assembly, interacts with PCNA. Three molecules of FEN1 bind to one PCNA trimer with each molecule binding to one PCNA monomer. PCNA stimulates the nuclease activity without altering cleavage specificity. Mg(2+) serves as cofactor. Phosphorylated. Phosphorylation upon DNA damage induces relocalization to the nuclear plasma.

It is found in the nucleus. It localises to the nucleolus. The protein resides in the nucleoplasm. Its subcellular location is the mitochondrion. Structure-specific nuclease with 5'-flap endonuclease and 5'-3' exonuclease activities involved in DNA replication and repair. During DNA replication, cleaves the 5'-overhanging flap structure that is generated by displacement synthesis when DNA polymerase encounters the 5'-end of a downstream Okazaki fragment. It enters the flap from the 5'-end and then tracks to cleave the flap base, leaving a nick for ligation. Also involved in the long patch base excision repair (LP-BER) pathway, by cleaving within the apurinic/apyrimidinic (AP) site-terminated flap. Acts as a genome stabilization factor that prevents flaps from equilibrating into structures that lead to duplications and deletions. Also possesses 5'-3' exonuclease activity on nicked or gapped double-stranded DNA, and exhibits RNase H activity. Also involved in replication and repair of rDNA and in repairing mitochondrial DNA. This is Flap endonuclease 1 from Phytophthora infestans (strain T30-4) (Potato late blight agent).